A 604-amino-acid chain; its full sequence is MHRYRTHTCGAIRPSDVGQTVRLSGWCHRIRDHGGVLFIDLRDHYGLTQCVIDSDSKAFKAAETARSEWVIRIDGRVRTRPAGTENAELPTGSVEVYIDDLEVLGPAGELPLPVFGDQEYPEETRLKYRFLDLRREKLHANIMKRGAIVDSLRRRMREGGFFEFQTPILTASSPEGARDYLVPSRVHPGKFYALPQAPQQFKQLTMIAGFDRYFQIAPCFRDEDARADRSPGEFYQLDIEMSFVTQEDVFQAVEPVLRGVFEEFAGGKRVTKEFPRITYADAMLKYGVDKPDLRNPLIIADVTDEFADDAVEFKAFKGVIKSGGVVRAIPATGAAGQPRSFFDKLNDWARSEGAPGLGYIVFEEEGGALTGKGPIAKFIPAAIQARIAEKAGAKAGDAVFFAAGTEAKAAGLAGKARIRIGDELKLSDTDQFAFCWVVDFPMYEWNEEDKKIDFSHNPFSMPNFDRDEFLALGEADSEKILGIKAFQYDIVCNGIELSSGAIRNHRPDVMEKAFAIAGYGRDVLEEKFGGMLNALRLGAPPHGGIAPGVDRIVMLLCEEPNIREVVLFPMNQRAEDLMMGAPAEATPKQLRELHIRLNLPEKKA.

Glutamate 175 is a binding site for L-aspartate. The tract at residues 199 to 202 (QQFK) is aspartate. Residues arginine 221 and histidine 456 each contribute to the L-aspartate site. ATP is bound at residue 221-223 (RDE). An ATP-binding site is contributed by glutamate 496. Arginine 503 is an L-aspartate binding site. Residue 548–551 (GVDR) coordinates ATP.

Belongs to the class-II aminoacyl-tRNA synthetase family. Type 1 subfamily. In terms of assembly, homodimer.

The protein resides in the cytoplasm. It catalyses the reaction tRNA(Asx) + L-aspartate + ATP = L-aspartyl-tRNA(Asx) + AMP + diphosphate. Aspartyl-tRNA synthetase with relaxed tRNA specificity since it is able to aspartylate not only its cognate tRNA(Asp) but also tRNA(Asn). Reaction proceeds in two steps: L-aspartate is first activated by ATP to form Asp-AMP and then transferred to the acceptor end of tRNA(Asp/Asn). The polypeptide is Aspartate--tRNA(Asp/Asn) ligase (Methylorubrum extorquens (strain CM4 / NCIMB 13688) (Methylobacterium extorquens)).